A 458-amino-acid polypeptide reads, in one-letter code: Dynein regulatory complex protein 10 (458 aa).

3 coiled-coil regions span residues 96–137 (GQTL…HKVN), 209–255 (IQDI…KNHL), and 285–379 (QVRL…IRAE). Residues 397–426 (MVRAATLIQAVWKGYLVRSILRSKKKKRGK) form the IQ domain. Residues 419–458 (SKKKKRGKGKGKDKGKGKEKPKEEKAKEKKPKAKGKGKKK) are disordered. The span at 428–445 (KGKDKGKGKEKPKEEKAK) shows a compositional bias: basic and acidic residues. Basic residues predominate over residues 446–458 (EKKPKAKGKGKKK).

Belongs to the DRC10 family. In terms of assembly, component of the nexin-dynein regulatory complex (N-DRC). Interacts with CFAP52.

The protein resides in the cytoplasm. Its subcellular location is the cytoskeleton. It is found in the flagellum axoneme. In terms of biological role, component of the nexin-dynein regulatory complex (N-DRC), a key regulator of ciliary/flagellar motility which maintains the alignment and integrity of the distal axoneme and regulates microtubule sliding in motile axonemes. This Mus musculus (Mouse) protein is Dynein regulatory complex protein 10 (Iqcd).